The primary structure comprises 304 residues: Porphobilinogen deaminase (304 aa).

Cys-240 is modified (S-(dipyrrolylmethanemethyl)cysteine).

The protein belongs to the HMBS family. Monomer. It depends on dipyrromethane as a cofactor.

It carries out the reaction 4 porphobilinogen + H2O = hydroxymethylbilane + 4 NH4(+). The protein operates within porphyrin-containing compound metabolism; protoporphyrin-IX biosynthesis; coproporphyrinogen-III from 5-aminolevulinate: step 2/4. In terms of biological role, tetrapolymerization of the monopyrrole PBG into the hydroxymethylbilane pre-uroporphyrinogen in several discrete steps. The sequence is that of Porphobilinogen deaminase from Xanthomonas campestris pv. campestris (strain ATCC 33913 / DSM 3586 / NCPPB 528 / LMG 568 / P 25).